We begin with the raw amino-acid sequence, 273 residues long: 4-hydroxy-tetrahydrodipicolinate reductase (273 aa).

Residues 10–15 (GAGGRM), Glu-36, 100–102 (GTT), and 124–127 (SGNM) each bind NAD(+). The active-site Proton donor/acceptor is His-157. His-158 serves as a coordination point for (S)-2,3,4,5-tetrahydrodipicolinate. The Proton donor role is filled by Lys-161. A (S)-2,3,4,5-tetrahydrodipicolinate-binding site is contributed by 167 to 168 (GT).

The protein belongs to the DapB family.

It is found in the cytoplasm. The enzyme catalyses (S)-2,3,4,5-tetrahydrodipicolinate + NAD(+) + H2O = (2S,4S)-4-hydroxy-2,3,4,5-tetrahydrodipicolinate + NADH + H(+). The catalysed reaction is (S)-2,3,4,5-tetrahydrodipicolinate + NADP(+) + H2O = (2S,4S)-4-hydroxy-2,3,4,5-tetrahydrodipicolinate + NADPH + H(+). Its pathway is amino-acid biosynthesis; L-lysine biosynthesis via DAP pathway; (S)-tetrahydrodipicolinate from L-aspartate: step 4/4. Its function is as follows. Catalyzes the conversion of 4-hydroxy-tetrahydrodipicolinate (HTPA) to tetrahydrodipicolinate. The chain is 4-hydroxy-tetrahydrodipicolinate reductase from Rhodopseudomonas palustris (strain BisA53).